The sequence spans 70 residues: Probable non-specific lipid-transfer protein 2 (70 aa).

Intrachain disulfides connect C4–C38, C12–C26, C27–C62, and C36–C69.

In terms of biological role, potential phospholipid transfer protein. This Zea mays (Maize) protein is Probable non-specific lipid-transfer protein 2.